The chain runs to 591 residues: Aspartate--tRNA(Asp/Asn) ligase (591 aa).

Glutamate 174 contributes to the L-aspartate binding site. Positions 198 to 201 (QLFK) are aspartate. Arginine 220 lines the L-aspartate pocket. ATP is bound by residues 220 to 222 (RDE) and glutamine 229. Histidine 450 is an L-aspartate binding site. Glutamate 483 contributes to the ATP binding site. An L-aspartate-binding site is contributed by arginine 490. Residue 535-538 (GLDR) participates in ATP binding.

It belongs to the class-II aminoacyl-tRNA synthetase family. Type 1 subfamily. In terms of assembly, homodimer.

The protein resides in the cytoplasm. The catalysed reaction is tRNA(Asx) + L-aspartate + ATP = L-aspartyl-tRNA(Asx) + AMP + diphosphate. In terms of biological role, aspartyl-tRNA synthetase with relaxed tRNA specificity since it is able to aspartylate not only its cognate tRNA(Asp) but also tRNA(Asn). Reaction proceeds in two steps: L-aspartate is first activated by ATP to form Asp-AMP and then transferred to the acceptor end of tRNA(Asp/Asn). In Azotobacter vinelandii (strain DJ / ATCC BAA-1303), this protein is Aspartate--tRNA(Asp/Asn) ligase.